Consider the following 278-residue polypeptide: Phosphonates import ATP-binding protein PhnC 1 (278 aa).

The ABC transporter domain maps to 5 to 253 (IRVDSLNKTF…FLNELYGAEG (249 aa)). 37–44 (GASGSGKS) serves as a coordination point for ATP.

This sequence belongs to the ABC transporter superfamily. Phosphonates importer (TC 3.A.1.9.1) family. The complex is composed of two ATP-binding proteins (PhnC), two transmembrane proteins (PhnE) and a solute-binding protein (PhnD).

Its subcellular location is the cell inner membrane. The catalysed reaction is phosphonate(out) + ATP + H2O = phosphonate(in) + ADP + phosphate + H(+). Functionally, part of the ABC transporter complex PhnCDE involved in phosphonates import. Responsible for energy coupling to the transport system. This is Phosphonates import ATP-binding protein PhnC 1 from Pseudomonas aeruginosa (strain UCBPP-PA14).